Consider the following 1162-residue polypeptide: Transcription termination factor 2 (1162 aa).

Zn(2+)-binding residues include Cys-6, His-9, Cys-32, and Cys-37. A GRF-type zinc finger spans residues 6 to 46 (CPEHGTFCFLKTGVRDGPNKGKSFYVCRADTCSFVRATDIP). Disordered regions lie at residues 97-116 (PDSK…ETFH), 142-358 (IKGE…EEDD), 388-407 (DRSV…KVEP), and 459-503 (LSPE…TQPV). Positions 105–116 (SNKSQHASETFH) are enriched in polar residues. Residues 142–178 (IKGEGEEKKADKKQREKGDQLFDQKKEQKPEMMEKDL) are compositionally biased toward basic and acidic residues. Residue Lys-143 forms a Glycyl lysine isopeptide (Lys-Gly) (interchain with G-Cter in SUMO2) linkage. Polar residues predominate over residues 219 to 232 (IKSQQCQGNELTRP). The span at 233–245 (SASSQEKSSGKSQ) shows a compositional bias: low complexity. Residues 246–258 (DVQRESEPLREKV) show a composition bias toward basic and acidic residues. Polar residues predominate over residues 261-274 (LLPQNVHSHNSISK). The segment covering 323–338 (PAPGGPAAQAAPAAPG) has biased composition (low complexity). A compositionally biased stretch (polar residues) spans 459–485 (LSPEQGTNEKSNSQVPQQSHFTKTTTG). Phosphoserine is present on Ser-460. The 204-residue stretch at 583–786 (WRESQKPQGG…YSLLKFLRCS (204 aa)) folds into the Helicase ATP-binding domain. 596–603 (DDMGLGKT) contributes to the ATP binding site. The DEAH box motif lies at 737–740 (DEAH). Positions 871–890 (KRHESRGNQSGRSPNNPFSR) are disordered. Residues 877-888 (GNQSGRSPNNPF) are compositionally biased toward polar residues. Residues Ser-883 and Ser-908 each carry the phosphoserine modification. Residues 995–1157 (SLLAELEAIQ…VTKLTLADLR (163 aa)) enclose the Helicase C-terminal domain.

The protein belongs to the SNF2/RAD54 helicase family. As to quaternary structure, interacts with CDC5L. Part of the spliceosome.

The protein localises to the cytoplasm. Its subcellular location is the nucleus. DsDNA-dependent ATPase which acts as a transcription termination factor by coupling ATP hydrolysis with removal of RNA polymerase II from the DNA template. May contribute to mitotic transcription repression. May also be involved in pre-mRNA splicing. The chain is Transcription termination factor 2 (TTF2) from Homo sapiens (Human).